The following is a 497-amino-acid chain: Probable malate:quinone oxidoreductase (497 aa).

It belongs to the MQO family. FAD serves as cofactor.

The enzyme catalyses (S)-malate + a quinone = a quinol + oxaloacetate. Its pathway is carbohydrate metabolism; tricarboxylic acid cycle; oxaloacetate from (S)-malate (quinone route): step 1/1. The sequence is that of Probable malate:quinone oxidoreductase from Tolumonas auensis (strain DSM 9187 / NBRC 110442 / TA 4).